A 189-amino-acid chain; its full sequence is Flavin prenyltransferase UbiX (189 aa).

Residues 10–12 (GAS), S37, 88–91 (SIKT), and R123 contribute to the FMN site. Dimethylallyl phosphate-binding residues include Y153 and R169.

The protein belongs to the UbiX/PAD1 family.

It carries out the reaction dimethylallyl phosphate + FMNH2 = prenylated FMNH2 + phosphate. It participates in cofactor biosynthesis; ubiquinone biosynthesis. Flavin prenyltransferase that catalyzes the synthesis of the prenylated FMN cofactor (prenyl-FMN) for 4-hydroxy-3-polyprenylbenzoic acid decarboxylase UbiD. The prenyltransferase is metal-independent and links a dimethylallyl moiety from dimethylallyl monophosphate (DMAP) to the flavin N5 and C6 atoms of FMN. The polypeptide is Flavin prenyltransferase UbiX (Escherichia coli O157:H7).